The chain runs to 349 residues: Histidinol-phosphate aminotransferase (349 aa).

At lysine 206 the chain carries N6-(pyridoxal phosphate)lysine.

It belongs to the class-II pyridoxal-phosphate-dependent aminotransferase family. Histidinol-phosphate aminotransferase subfamily. Homodimer. It depends on pyridoxal 5'-phosphate as a cofactor.

The catalysed reaction is L-histidinol phosphate + 2-oxoglutarate = 3-(imidazol-4-yl)-2-oxopropyl phosphate + L-glutamate. The protein operates within amino-acid biosynthesis; L-histidine biosynthesis; L-histidine from 5-phospho-alpha-D-ribose 1-diphosphate: step 7/9. In Streptococcus mutans serotype c (strain ATCC 700610 / UA159), this protein is Histidinol-phosphate aminotransferase.